The sequence spans 382 residues: Adenosine 3'-phospho 5'-phosphosulfate transporter 2 (382 aa).

The span at 1–10 (MSVSNRNGNG) shows a compositional bias: polar residues. The interval 1–33 (MSVSNRNGNGSEVIYVGDRSTNRPPRNAPSPDE) is disordered. A run of 10 helical transmembrane segments spans residues 56–76 (LCCA…ELIF), 83–103 (PYGW…GYVE), 121–141 (VLLA…LGYL), 144–164 (PTQV…SILI), 170–190 (GPLD…FTLA), 197–217 (NFNP…AAIG), 234–254 (VVIY…LLTG), 271–291 (FGYA…VLTL), 299–319 (LAAT…FVFF), and 323–343 (FTIN…LNVY).

Belongs to the nucleotide-sugar transporter family. SLC35B subfamily.

The protein resides in the golgi apparatus membrane. In terms of biological role, mediates the transport of adenosine 3'-phospho 5'-phosphosulfate (PAPS), from cytosol into Golgi. PAPS is a universal sulfuryl donor for sulfation events that take place in the Golgi. Essential for viability. Involved in glycosaminoglycan synthesis and the subsequent signaling. May be involved in hh and dpp signaling by controlling the sulfation of heparan sulfate (HS). This Aedes aegypti (Yellowfever mosquito) protein is Adenosine 3'-phospho 5'-phosphosulfate transporter 2.